Consider the following 203-residue polypeptide: HTH-type transcriptional regulator CymR (203 aa).

Residues 13-73 (METQGKLIAA…ATFEWLYEQI (61 aa)) enclose the HTH tetR-type domain. Positions 36-55 (RIADVPGAAGVSRGAQSHHF) form a DNA-binding region, H-T-H motif.

Functionally, involved in the repression of the cym and cmt operons which are responsible of the p-cymene degradation. The polypeptide is HTH-type transcriptional regulator CymR (Pseudomonas putida (Arthrobacter siderocapsulatus)).